We begin with the raw amino-acid sequence, 197 residues long: MIAIVNYGVGNLKSISKALETVGAKVSVTSDPEKIKCASGVVFPGVGAFKSAIEKLNLIRDVIDSLEVPILGICLGMQLFATESTEGGVYRGLDYIPGRVVRFPPSVGKVPHMGWNTLKITREAEILDGVESGEFVYFVHSYYMQTDDEFVISKTDYGIDFPSGVERENYIGFQFHPEKSGKVGLRILENFVNIVKR.

The Glutamine amidotransferase type-1 domain maps to 1–197 (MIAIVNYGVG…LENFVNIVKR (197 aa)). Cysteine 74 (nucleophile) is an active-site residue. Active-site residues include histidine 176 and glutamate 178.

In terms of assembly, heterodimer of HisH and HisF.

It localises to the cytoplasm. The catalysed reaction is 5-[(5-phospho-1-deoxy-D-ribulos-1-ylimino)methylamino]-1-(5-phospho-beta-D-ribosyl)imidazole-4-carboxamide + L-glutamine = D-erythro-1-(imidazol-4-yl)glycerol 3-phosphate + 5-amino-1-(5-phospho-beta-D-ribosyl)imidazole-4-carboxamide + L-glutamate + H(+). It catalyses the reaction L-glutamine + H2O = L-glutamate + NH4(+). The protein operates within amino-acid biosynthesis; L-histidine biosynthesis; L-histidine from 5-phospho-alpha-D-ribose 1-diphosphate: step 5/9. IGPS catalyzes the conversion of PRFAR and glutamine to IGP, AICAR and glutamate. The HisH subunit catalyzes the hydrolysis of glutamine to glutamate and ammonia as part of the synthesis of IGP and AICAR. The resulting ammonia molecule is channeled to the active site of HisF. This Archaeoglobus fulgidus (strain ATCC 49558 / DSM 4304 / JCM 9628 / NBRC 100126 / VC-16) protein is Imidazole glycerol phosphate synthase subunit HisH (hisH).